The following is a 199-amino-acid chain: MQYPEAISRLIESFTKLPGIGPKTAVRLAFHVLDMEEDDVLMFGKALVSAKRDISYCSICGNITDKDPCYVCSDKHRNRTIVCVVQDSRDVIAMEKMRDYQGLYHVLHGAISPMEGIGPEDINVSSLLTRLQADEAITEIILATNPNIEGEATAMYLSRLLKPTGIRVTRIAHGLPVGGDLEYADEVTLSRAMEGRREL.

The C4-type zinc finger occupies 57 to 72 (CSICGNITDKDPCYVC). The 97-residue stretch at 80–176 (TIVCVVQDSR…RVTRIAHGLP (97 aa)) folds into the Toprim domain.

Belongs to the RecR family.

Functionally, may play a role in DNA repair. It seems to be involved in an RecBC-independent recombinational process of DNA repair. It may act with RecF and RecO. In Exiguobacterium sibiricum (strain DSM 17290 / CCUG 55495 / CIP 109462 / JCM 13490 / 255-15), this protein is Recombination protein RecR.